Reading from the N-terminus, the 467-residue chain is Sexual differentiation process putative subtilase-type proteinase isp6 (467 aa).

The Inhibitor I9 domain occupies 86 to 176 (YIIVLQPDLS…AVERDQVVSI (91 aa)). The region spanning 186-467 (PWGLARISHK…NLLAFNGAQE (282 aa)) is the Peptidase S8 domain. Active-site charge relay system residues include aspartate 221, histidine 253, and serine 409.

It belongs to the peptidase S8 family.

The sequence is that of Sexual differentiation process putative subtilase-type proteinase isp6 (isp6) from Schizosaccharomyces pombe (strain 972 / ATCC 24843) (Fission yeast).